Reading from the N-terminus, the 319-residue chain is MKIGIVGLGRVGSSTAFALLMKGFAREMVLIDVDKKRAEGDALDLIHGTPFTRRANIYAGDYADLKGSDVVIVAAGVPQKPGETRLQLLGRNARVMKEIARNVSKYAPDSIVIVVTNPVDVLTYFFLKESGMDPRKVFGSGTVLDTARLRTLIAQHCGFSPRSVHVYVIGEHGDSEVPVWSGAMIGGIPLQNMCQICQKCDSKILENFAEKTKRAAYEIIERKGATHYAIALAVADIVESIFFDEKRVLTLSVYLEDYLGVKDLCISVPVTLGKHGVERILKLNLNEEELEAFRKSASILKNAINEITAEENKHQNTGG.

NAD(+) contacts are provided by residues valine 11, aspartate 32, arginine 37, tyrosine 62, and glycine 76 to valine 77. Substrate contacts are provided by residues glutamine 79, arginine 85, and asparagine 117–aspartate 120. NAD(+)-binding positions include valine 115–asparagine 117 and serine 140. Residue aspartate 145 to arginine 148 participates in substrate binding. Beta-D-fructose 1,6-bisphosphate-binding residues include arginine 150 and histidine 165. Catalysis depends on histidine 172, which acts as the Proton acceptor. A Phosphotyrosine modification is found at tyrosine 217. A substrate-binding site is contributed by threonine 226.

The protein belongs to the LDH/MDH superfamily. LDH family. Homotetramer.

Its subcellular location is the cytoplasm. It catalyses the reaction (S)-lactate + NAD(+) = pyruvate + NADH + H(+). The protein operates within fermentation; pyruvate fermentation to lactate; (S)-lactate from pyruvate: step 1/1. With respect to regulation, allosterically activated by fructose 1,6-bisphosphate (FBP). Catalyzes the conversion of lactate to pyruvate. The protein is L-lactate dehydrogenase of Thermotoga sp. (strain RQ2).